The chain runs to 207 residues: Large ribosomal subunit protein uL3 (207 aa).

Residues 119–143 (GFQGSIKRNGQHRGPMAHGSRYHRR) form a disordered region.

It belongs to the universal ribosomal protein uL3 family. In terms of assembly, part of the 50S ribosomal subunit. Forms a cluster with proteins L14 and L19.

Functionally, one of the primary rRNA binding proteins, it binds directly near the 3'-end of the 23S rRNA, where it nucleates assembly of the 50S subunit. The protein is Large ribosomal subunit protein uL3 of Ligilactobacillus salivarius (strain UCC118) (Lactobacillus salivarius).